The sequence spans 505 residues: Deoxyguanosinetriphosphate triphosphohydrolase (505 aa).

Residues 66-273 enclose the HD domain; it reads RLTHSMEVQQ…MEAADDISYC (208 aa).

It belongs to the dGTPase family. Type 1 subfamily. In terms of assembly, homotetramer. The cofactor is Mg(2+).

It catalyses the reaction dGTP + H2O = 2'-deoxyguanosine + triphosphate + H(+). Functionally, dGTPase preferentially hydrolyzes dGTP over the other canonical NTPs. The protein is Deoxyguanosinetriphosphate triphosphohydrolase of Escherichia coli O127:H6 (strain E2348/69 / EPEC).